The primary structure comprises 319 residues: Cytochrome f (319 aa).

Residues Met1–Ala34 form the signal peptide. 4 residues coordinate heme: Tyr35, Cys55, Cys58, and His59. A helical membrane pass occupies residues Val285–Lys305.

Belongs to the cytochrome f family. In terms of assembly, the 4 large subunits of the cytochrome b6-f complex are cytochrome b6, subunit IV (17 kDa polypeptide, petD), cytochrome f and the Rieske protein, while the 4 small subunits are PetG, PetL, PetM and PetN. The complex functions as a dimer. It depends on heme as a cofactor.

The protein resides in the plastid. It localises to the chloroplast thylakoid membrane. Its function is as follows. Component of the cytochrome b6-f complex, which mediates electron transfer between photosystem II (PSII) and photosystem I (PSI), cyclic electron flow around PSI, and state transitions. This chain is Cytochrome f, found in Pinus koraiensis (Korean pine).